Consider the following 1013-residue polypeptide: Antigenic heat-stable 120 kDa protein (1013 aa).

Disordered stretches follow at residues 1-73 (DTSE…TSDP) and 348-396 (GQSK…PQSQ). Residues 12 to 27 (EYTEEQKQKLEQEQKE) show a composition bias toward basic and acidic residues. A compositionally biased stretch (low complexity) spans 47–61 (SASSAQSTPSISALS). 3 stretches are compositionally biased toward polar residues: residues 62–73 (GNISPDSQTSDP), 348–373 (GQSK…QYKQ), and 380–396 (PTNQ…PQSQ).

It localises to the cytoplasm. This is Antigenic heat-stable 120 kDa protein (sca4) from Rickettsia rhipicephali.